A 967-amino-acid chain; its full sequence is Leucine--tRNA ligase (967 aa).

The 'HIGH' region signature appears at 43 to 53; it reads PYLSGHLHVGH. The 'KMSKS' region signature appears at 650–654; that stretch reads KMSKS. Residue K653 coordinates ATP.

It belongs to the class-I aminoacyl-tRNA synthetase family.

Its subcellular location is the cytoplasm. The enzyme catalyses tRNA(Leu) + L-leucine + ATP = L-leucyl-tRNA(Leu) + AMP + diphosphate. This is Leucine--tRNA ligase from Pyrococcus furiosus (strain ATCC 43587 / DSM 3638 / JCM 8422 / Vc1).